A 155-amino-acid chain; its full sequence is MNENISKVVIYTDGACAGNPGPGGWGALLQFNDTSKEILGYELDTTNNRMEITAALEALRILKKSCNVEIYTDSKYLQQGITTWIHNWVKNNWCKSNNEAVKNADLWQKLYAELSKHTIIWKWVKGHANNSGNIAADKLAAQGRQTAIEILKCRV.

Positions 4 to 145 (NISKVVIYTD…ADKLAAQGRQ (142 aa)) constitute an RNase H type-1 domain. Residues D13, E51, D73, and D137 each contribute to the Mg(2+) site.

It belongs to the RNase H family. In terms of assembly, monomer. It depends on Mg(2+) as a cofactor.

The protein localises to the cytoplasm. It catalyses the reaction Endonucleolytic cleavage to 5'-phosphomonoester.. Functionally, endonuclease that specifically degrades the RNA of RNA-DNA hybrids. In Rickettsia canadensis (strain McKiel), this protein is Ribonuclease H.